The following is a 465-amino-acid chain: Probable Xaa-Pro aminopeptidase pepP (465 aa).

Mn(2+) is bound by residues Asp-261, Asp-272, Glu-395, and Glu-435.

Belongs to the peptidase M24B family. The cofactor is Mn(2+).

The catalysed reaction is Release of any N-terminal amino acid, including proline, that is linked to proline, even from a dipeptide or tripeptide.. In terms of biological role, catalyzes the removal of a penultimate prolyl residue from the N-termini of peptides. The sequence is that of Probable Xaa-Pro aminopeptidase pepP (pepP) from Talaromyces marneffei (strain ATCC 18224 / CBS 334.59 / QM 7333) (Penicillium marneffei).